Reading from the N-terminus, the 188-residue chain is Probable DNA-directed RNA polymerase subunit delta (188 aa).

Positions 14–83 (LSMIEVARAI…GDNKWGLRSW (70 aa)) constitute an HTH HARE-type domain. The tract at residues 117–188 (GDEDAIDYSD…EDDEDDEEEE (72 aa)) is disordered.

This sequence belongs to the RpoE family. As to quaternary structure, RNAP is composed of a core of 2 alpha, a beta and a beta' subunits. The core is associated with a delta subunit and one of several sigma factors.

Functionally, participates in both the initiation and recycling phases of transcription. In the presence of the delta subunit, RNAP displays an increased specificity of transcription, a decreased affinity for nucleic acids, and an increased efficiency of RNA synthesis because of enhanced recycling. This Streptococcus uberis (strain ATCC BAA-854 / 0140J) protein is Probable DNA-directed RNA polymerase subunit delta.